Consider the following 141-residue polypeptide: MRFKKYFKIKYKNNNVYEHDLIHFGDFGLKSLGNCNLTSEQLTASLKAIKRVIKKKNFLIIKALPFWMLTRKPRDVRMGRGKGSPAVKVYPLKAGKIIFEFKNVNETLLLRALKSSSLRLPVPTKVVKKYDKRTDCIKSSW.

This sequence belongs to the universal ribosomal protein uL16 family.

Its subcellular location is the mitochondrion. The chain is Large ribosomal subunit protein uL16m (RPL16) from Acanthamoeba castellanii (Amoeba).